Consider the following 210-residue polypeptide: Proteasome subunit beta (210 aa).

Positions 1–9 are cleaved as a propeptide — removed in mature form; by autocatalysis; sequence MNDKNTLKG. Thr-10 functions as the Nucleophile in the catalytic mechanism.

Belongs to the peptidase T1B family. In terms of assembly, the 20S proteasome core is composed of 14 alpha and 14 beta subunits that assemble into four stacked heptameric rings, resulting in a barrel-shaped structure. The two inner rings, each composed of seven catalytic beta subunits, are sandwiched by two outer rings, each composed of seven alpha subunits. The catalytic chamber with the active sites is on the inside of the barrel. Has a gated structure, the ends of the cylinder being occluded by the N-termini of the alpha-subunits. Is capped at one or both ends by the proteasome regulatory ATPase, PAN.

It localises to the cytoplasm. The catalysed reaction is Cleavage of peptide bonds with very broad specificity.. The formation of the proteasomal ATPase PAN-20S proteasome complex, via the docking of the C-termini of PAN into the intersubunit pockets in the alpha-rings, triggers opening of the gate for substrate entry. Interconversion between the open-gate and close-gate conformations leads to a dynamic regulation of the 20S proteasome proteolysis activity. In terms of biological role, component of the proteasome core, a large protease complex with broad specificity involved in protein degradation. In Methanothermobacter thermautotrophicus (strain ATCC 29096 / DSM 1053 / JCM 10044 / NBRC 100330 / Delta H) (Methanobacterium thermoautotrophicum), this protein is Proteasome subunit beta.